The sequence spans 312 residues: Malate dehydrogenase (312 aa).

NAD(+)-binding positions include 12–17 (GAGFTG) and Asp36. Arg87 and Arg93 together coordinate substrate. Residues Asn100 and 123–125 (LTN) contribute to the NAD(+) site. Substrate is bound at residue Asn125. Position 149 is a phosphoserine (Ser149). A substrate-binding site is contributed by Arg156. His180 (proton acceptor) is an active-site residue.

It belongs to the LDH/MDH superfamily. MDH type 3 family.

The enzyme catalyses (S)-malate + NAD(+) = oxaloacetate + NADH + H(+). Catalyzes the reversible oxidation of malate to oxaloacetate. This Geobacillus kaustophilus (strain HTA426) protein is Malate dehydrogenase.